The following is a 231-amino-acid chain: Fibronectin type III domain-containing protein 4 (231 aa).

A signal peptide spans 1 to 40 (MPLAPPANSVETMASLMPLSPYLSPTVLLLVSCDLGFVRA). Residues 41–163 (DRPPSPVNVT…GLDGERPLQT (123 aa)) are Extracellular-facing. The Fibronectin type-III domain occupies 43-136 (PPSPVNVTVT…PRVHFRTLKG (94 aa)). N-linked (GlcNAc...) asparagine glycans are attached at residues N48 and N143. The disordered stretch occupies residues 118–156 (GLRGESPPGPRVHFRTLKGSDRLPSNSSSPGDITVEGLD). Residues 164–184 (GEVVIIVVVLLMWAAVIGLFC) traverse the membrane as a helical segment. Topologically, residues 185–231 (RQYDIIKDNDSNNNPKEKGKGPEQSPQGRPVGTTRQKKSPSINTIDV) are cytoplasmic. The span at 193-205 (NDSNNNPKEKGKG) shows a compositional bias: basic and acidic residues. A disordered region spans residues 193 to 231 (NDSNNNPKEKGKGPEQSPQGRPVGTTRQKKSPSINTIDV).

In terms of tissue distribution, predominantly expressed in the liver and in the brain, including in the cortex, hypothalamus and hippocampus. Also expressed in heart, lung, kidney and testis. In the colon, expressed in the epithelium and in a subset of immune cells in lymphoid aggregates.

The protein localises to the membrane. It localises to the secreted. Functionally, has anti-inflammatory properties. In the colon, acts on macrophages to down-regulate inflammation. May suppress osteoclastogenesis and mature osteoclast resorptive function. In white adipose tissue, decreases local inflammation, via interaction with GPR116. Also required for proper systemic glucose tolerance, specifically sensitizing white adipocytes to insulin and promoting glucose uptake. The insulin sensitizing function in adipose tissue is mediated by interaction with ADGRF5/GPR116 and activation of cAMP signaling. In Mus musculus (Mouse), this protein is Fibronectin type III domain-containing protein 4 (Fndc4).